Here is a 178-residue protein sequence, read N- to C-terminus: Heavy metal-associated isoprenylated plant protein 30 (178 aa).

Positions 45–108 constitute an HMA domain; sequence LQTIDLKVRM…AVRRAGKRAE (64 aa). A metal cation-binding residues include Cys56 and Cys59. Position 175 is a cysteine methyl ester (Cys175). The S-farnesyl cysteine moiety is linked to residue Cys175. Residues 176-178 constitute a propeptide, removed in mature form; that stretch reads SLM.

The protein belongs to the HIPP family. Interacts with ZHD3/HB21, ZHD11/HB29 and ZHD8/HB30.

Its function is as follows. Heavy-metal-binding protein. In Arabidopsis thaliana (Mouse-ear cress), this protein is Heavy metal-associated isoprenylated plant protein 30.